Here is a 390-residue protein sequence, read N- to C-terminus: Pyruvate dehydrogenase E1 component subunit alpha, somatic form, mitochondrial (390 aa).

A mitochondrion-targeting transit peptide spans 1-29 (MRKMLAAVSRVLSGASQKPASRVLVASRN). Position 63 is an N6-acetyllysine; alternate (Lys-63). Lys-63 carries the post-translational modification N6-succinyllysine; alternate. Pyruvate contacts are provided by His-92, Tyr-118, Arg-119, Ala-157, Gly-165, Val-167, Asp-196, Gly-197, Ala-198, Asn-225, and Tyr-227. Thiamine diphosphate contacts are provided by Tyr-118 and Arg-119. Residues Gly-165, Val-167, Asp-196, Gly-197, Ala-198, and Asn-225 each coordinate thiamine diphosphate. Residue Asp-196 coordinates Mg(2+). Asn-225 and Tyr-227 together coordinate Mg(2+). A Phosphoserine; by PDK1 modification is found at Ser-232. An N6-acetyllysine; alternate modification is found at Lys-244. Lys-244 carries the N6-succinyllysine; alternate modification. Lys-277 is modified (N6-succinyllysine). Position 292 (His-292) interacts with thiamine diphosphate. The residue at position 293 (Ser-293) is a Phosphoserine; by PDK1, PDK2, PDK3 and PDK4. Ser-295 is modified (phosphoserine). Ser-300 is modified (phosphoserine; by PDK1, PDK2, PDK3 and PDK4). Phosphotyrosine is present on Tyr-301. At Lys-313 the chain carries N6-acetyllysine; alternate. Residue Lys-313 is modified to N6-succinyllysine; alternate. Residues Lys-321 and Lys-336 each carry the N6-acetyllysine modification. Lys-385 is modified (N6-succinyllysine).

As to quaternary structure, heterotetramer of two PDHA1 and two PDHB subunits. The heterotetramer interacts with DLAT, and is part of the multimeric pyruvate dehydrogenase complex that contains multiple copies of pyruvate dehydrogenase (E1), dihydrolipoamide acetyltransferase (DLAT, E2) and lipoamide dehydrogenase (DLD, E3). These subunits are bound to an inner core composed of about 48 DLAT and 12 PDHX molecules. It depends on thiamine diphosphate as a cofactor. Mg(2+) is required as a cofactor. In terms of processing, phosphorylation at Ser-232, Ser-293 and Ser-300 by PDK family kinases inactivates the enzyme; for this phosphorylation at a single site is sufficient. Phosphorylation at Ser-293 interferes with access to active site, and thereby inactivates the enzyme. Dephosphorylation at all three sites, i.e. at Ser-232, Ser-293 and Ser-300, is required for reactivation. Post-translationally, acetylation alters the phosphorylation pattern. Deacetylated by SIRT3.

It is found in the mitochondrion matrix. It carries out the reaction N(6)-[(R)-lipoyl]-L-lysyl-[protein] + pyruvate + H(+) = N(6)-[(R)-S(8)-acetyldihydrolipoyl]-L-lysyl-[protein] + CO2. Its activity is regulated as follows. Pyruvate dehydrogenase activity is inhibited by phosphorylation of PDHA1; it is reactivated by dephosphorylation. The pyruvate dehydrogenase complex catalyzes the overall conversion of pyruvate to acetyl-CoA and CO(2), and thereby links the glycolytic pathway to the tricarboxylic cycle. This chain is Pyruvate dehydrogenase E1 component subunit alpha, somatic form, mitochondrial (PDHA1), found in Macaca fascicularis (Crab-eating macaque).